Reading from the N-terminus, the 347-residue chain is Glutamyl-Q tRNA(Asp) synthetase (347 aa).

Residues 31 to 35 (RFAPS) and E67 contribute to the L-glutamate site. Positions 34 to 44 (PSPTSALHLGN) match the 'HIGH' region motif. Residues C121, C123, Y143, and C147 each coordinate Zn(2+). L-glutamate-binding residues include Y203 and R221. The 'KMSKS' region signature appears at 259–263 (RLSKS). Position 262 (K262) interacts with ATP.

The protein belongs to the class-I aminoacyl-tRNA synthetase family. GluQ subfamily. Requires Zn(2+) as cofactor.

Catalyzes the tRNA-independent activation of glutamate in presence of ATP and the subsequent transfer of glutamate onto a tRNA(Asp). Glutamate is transferred on the 2-amino-5-(4,5-dihydroxy-2-cyclopenten-1-yl) moiety of the queuosine in the wobble position of the QUC anticodon. The chain is Glutamyl-Q tRNA(Asp) synthetase from Cutibacterium acnes (strain DSM 16379 / KPA171202) (Propionibacterium acnes).